The following is a 366-amino-acid chain: NADH-quinone oxidoreductase subunit D (366 aa).

It belongs to the complex I 49 kDa subunit family. As to quaternary structure, NDH-1 is composed of 14 different subunits. Subunits NuoB, C, D, E, F, and G constitute the peripheral sector of the complex.

It localises to the cell membrane. The enzyme catalyses a quinone + NADH + 5 H(+)(in) = a quinol + NAD(+) + 4 H(+)(out). Its function is as follows. NDH-1 shuttles electrons from NADH, via FMN and iron-sulfur (Fe-S) centers, to quinones in the respiratory chain. The immediate electron acceptor for the enzyme in this species is believed to be a menaquinone. Couples the redox reaction to proton translocation (for every two electrons transferred, four hydrogen ions are translocated across the cytoplasmic membrane), and thus conserves the redox energy in a proton gradient. This chain is NADH-quinone oxidoreductase subunit D, found in Bacillus thuringiensis (strain Al Hakam).